The sequence spans 109 residues: Class I hydrophobin 2 (109 aa).

A signal peptide spans 1-18 (MQFKLAFVSIALATLAVA). Intrachain disulfides connect C30-C90, C37-C84, C38-C71, and C91-C104.

It belongs to the fungal hydrophobin family. In terms of assembly, self-assembles to form functional amyloid fibrils called rodlets. Self-assembly into fibrillar rodlets occurs spontaneously at hydrophobic:hydrophilic interfaces and the rodlets further associate laterally to form amphipathic monolayers.

It localises to the secreted. Its subcellular location is the cell wall. Aerial growth, conidiation, and dispersal of filamentous fungi in the environment rely upon a capability of their secreting small amphipathic proteins called hydrophobins (HPBs) with low sequence identity. Class I can self-assemble into an outermost layer of rodlet bundles on aerial cell surfaces, conferring cellular hydrophobicity that supports fungal growth, development and dispersal; whereas Class II form highly ordered films at water-air interfaces through intermolecular interactions but contribute nothing to the rodlet structure. Hyd2 is a class I hydrophobin that may allow the dikaryotic mycelia to attach to the hydrophobic surface of the substrate. Higher expression in dikaryotic mycelia than in monokaryotic mycelia indicates that dikaryons require more hyd2 hydrophobin than the monokaryons, presumably for a higher rate of hyphal growth. In Lentinula edodes (Shiitake mushroom), this protein is Class I hydrophobin 2.